The sequence spans 187 residues: Endoribonuclease YbeY (187 aa).

The Zn(2+) site is built by His-151, His-155, and His-161.

This sequence belongs to the endoribonuclease YbeY family. Zn(2+) is required as a cofactor.

It is found in the cytoplasm. Single strand-specific metallo-endoribonuclease involved in late-stage 70S ribosome quality control and in maturation of the 3' terminus of the 16S rRNA. This chain is Endoribonuclease YbeY, found in Prochlorococcus marinus (strain MIT 9313).